The chain runs to 342 residues: tRNA dimethylallyltransferase (342 aa).

Residue 39 to 46 participates in ATP binding; sequence GPTGSGKT. 41 to 46 is a substrate binding site; it reads TGSGKT. The interaction with substrate tRNA stretch occupies residues 64 to 67; the sequence is DSMQ.

The protein belongs to the IPP transferase family. Monomer. It depends on Mg(2+) as a cofactor.

The enzyme catalyses adenosine(37) in tRNA + dimethylallyl diphosphate = N(6)-dimethylallyladenosine(37) in tRNA + diphosphate. Its function is as follows. Catalyzes the transfer of a dimethylallyl group onto the adenine at position 37 in tRNAs that read codons beginning with uridine, leading to the formation of N6-(dimethylallyl)adenosine (i(6)A). In Chlamydia pneumoniae (Chlamydophila pneumoniae), this protein is tRNA dimethylallyltransferase.